Reading from the N-terminus, the 83-residue chain is Toxin To15 (83 aa).

Residues 1-19 (MKGIILLISCLMLIEVVVG) form the signal peptide. The LCN-type CS-alpha/beta domain occupies 21 to 82 (KEGYPLDSSG…IWNAKTNKCY (62 aa)). Cystine bridges form between Cys-31-Cys-81, Cys-35-Cys-57, Cys-43-Cys-62, and Cys-47-Cys-64.

Belongs to the long (4 C-C) scorpion toxin superfamily. Sodium channel inhibitor family. Beta subfamily. Expressed by the venom gland.

It is found in the secreted. Functionally, beta toxins bind voltage-independently at site-4 of sodium channels (Nav) and shift the voltage of activation toward more negative potentials thereby affecting sodium channel activation and promoting spontaneous and repetitive firing. This is Toxin To15 from Tityus obscurus (Amazonian scorpion).